The chain runs to 227 residues: Urease accessory protein UreE (227 aa).

The tract at residues 192-227 is disordered; it reads PHGSGLHVHAIHSHGHSHSHDHDHDHNHDHDHKHKQ. Positions 209–221 are enriched in basic and acidic residues; that stretch reads HSHDHDHDHNHDH.

Belongs to the UreE family.

The protein resides in the cytoplasm. Its function is as follows. Involved in urease metallocenter assembly. Binds nickel. Probably functions as a nickel donor during metallocenter assembly. The sequence is that of Urease accessory protein UreE from Yersinia bercovieri.